Consider the following 447-residue polypeptide: Glutamyl-tRNA(Gln) amidotransferase subunit A (447 aa).

Residues K51 and S126 each act as charge relay system in the active site. S150 functions as the Acyl-ester intermediate in the catalytic mechanism.

Belongs to the amidase family. GatA subfamily. Heterotrimer of A, B and C subunits.

It carries out the reaction L-glutamyl-tRNA(Gln) + L-glutamine + ATP + H2O = L-glutaminyl-tRNA(Gln) + L-glutamate + ADP + phosphate + H(+). Allows the formation of correctly charged Gln-tRNA(Gln) through the transamidation of misacylated Glu-tRNA(Gln) in organisms which lack glutaminyl-tRNA synthetase. The reaction takes place in the presence of glutamine and ATP through an activated gamma-phospho-Glu-tRNA(Gln). The protein is Glutamyl-tRNA(Gln) amidotransferase subunit A of Helicobacter hepaticus (strain ATCC 51449 / 3B1).